The chain runs to 1176 residues: MAKQNKGRKFFAASATAALVASAIVPVASAAQLNDFNKISGYAKEAVQSLVDAGVIQGDANGNFNPLKTISRAEAATIFTNALELEAEGDVNFKDVKADAWYYDAIAATVENGIFEGVSATEFAPNKQLTRSEAAKILVDAFELEGEGDLSEFADASTVKPWAKSYLEIAVANGVIKGSEANGKTNLNPNAPITRQDFAVVFSRTIENVDATPKVDKIEVVDAKTLNVTLSDGTKETVTLEKALEPNKETEVTFKIKDVEYKAKVTYVVTTATAVKSVSATNLKEVVVEFDGTVDKETAEDAANYALKSGKTIKSVSLAADNKTATVTLTDKLNNNKADAISISNVKAGDKEINVKNVEFTAVDNKIPEVTEVKSLGTKAVKVTLSEPVENLSSTNFTLDGKAYFGNVVMGAGNKTVILTPYSSSALSVGDHKLTVSGAKDFAGFVSLNSTHEFKVVEDKEAPTVTEATATLETVTLTFSEDIDMDTVKASNVYWKSGDSKKEASEFERIADNKYKFVFKGSEKTLPTGKVDVYVEDIKDYSDNKIAKDTKVTVTPEIDQTRPEVRKVTALDEKTIKVTFSKTVDGESAIKTGNYTVKDKDDKVVSVDKVTVDSKDSKSVIIDLYSKVSVGENTITIKNVKDATKLNNTMLDYTGKFTRSDKEGPDYEHVINADAKAKKVVLKFDKKMDAASLADYSNYLVKINDTLQTLSEDVATLSVSNDATVVTITFAETIKGDDVVFASGKAISGSGKVNVNELQVMGVKDTSGNVHKKFNGSENKITLSSTSTPLKLAKIDKDYDAKYTAELVDRKTVKVKFSTVINSAAANAFTSESHKIDSIQVNGTSTVTVKFKDEINTNASDLDLKVNLSKLVDIAGNESTNNTPIAIKAGINLLDSVAPVVVGEPVVDKETITFTFSENLTSVSIGEVLSTDFTVTRVSDNKDLAIKDYSVAIANNNQVVITLSDNREVATAYKVTAKNAKLITDDNGDKKNAIADFTKTTATKVEASGTLSLDAAKTNLNNEITKAKDAKATGTEGTAATNQIVGSKDALQVAIDVAELVKNDTAATLQQLTDAKTDLTAAITAYNAAKVEDISSLLVAPDLVLGTTDNGTITGFVAGTGETLKVTSDSAANVEVTDPTGLAVTAKAKGEANILVQVLKGDKVIKTGTVKVTVSE.

Positions 1–30 (MAKQNKGRKFFAASATAALVASAIVPVASA) are cleaved as a signal peptide. 3 SLH domains span residues 31–88 (AQLN…LEAE), 89–152 (GDVN…DLSE), and 153–216 (FADA…PKVD).

Its subcellular location is the secreted. It localises to the cell wall. It is found in the S-layer. Its function is as follows. The S-layer is a paracrystalline mono-layered assembly of proteins which coat the surface of bacteria. This Lysinibacillus sphaericus (Bacillus sphaericus) protein is Surface-layer 125 kDa protein.